Consider the following 656-residue polypeptide: PAN2-PAN3 deadenylation complex subunit PAN3 (656 aa).

The segment at 15–44 adopts a C3H1-type zinc-finger fold; that stretch reads SFKGTQCRNIIIHGYCKFENEGCQFNHGNS. A disordered region spans residues 71-104; sequence KTSSSFTPGKSPAVRSPDFSSLPAFQPGAPVNDQ. Residues 128 to 148 carry the PABPC-interacting motif-2 (PAM-2) motif; it reads AFAPSFNPYASESFTPSVSAG. The segment at 271-525 is pseudokinase domain; it reads QVFPRGSLPD…NIEDFTKLFS (255 aa). ATP contacts are provided by residues arginine 325, 375–382, and 428–429; these read DYYPQSQS and KK. Positions 526–564 form a coiled coil; that stretch reads HKVLSVVNSLQYNSEYLEQQLSRELENARLFRLMCKLNA. Positions 565-656 are knob domain; it reads IYGRLESRID…IDSTFRALTQ (92 aa).

It belongs to the protein kinase superfamily. PAN3 family. In terms of assembly, homodimer. Forms a heterotrimer with a catalytic subunit PAN2 to form the poly(A)-nuclease (PAN) deadenylation complex. Interacts (via PAM-2 motif) with poly(A)-binding protein PAB1 (via PABC domain), conferring substrate specificity of the enzyme complex.

Its subcellular location is the cytoplasm. Its function is as follows. Regulatory subunit of the poly(A)-nuclease (PAN) deadenylation complex, one of two cytoplasmic mRNA deadenylases involved in mRNA turnover. PAN specifically shortens poly(A) tails of RNA and the activity is stimulated by poly(A)-binding protein PAB1. PAN deadenylation is followed by rapid degradation of the shortened mRNA tails by the CCR4-NOT complex. Deadenylated mRNAs are then degraded by two alternative mechanisms, namely exosome-mediated 3'-5' exonucleolytic degradation, or deadenylation-dependent mRNA decaping and subsequent 5'-3' exonucleolytic degradation by XRN1. May also be involved in post-transcriptional maturation of mRNA poly(A) tails. PAN3 acts as a positive regulator for PAN activity, recruiting the catalytic subunit PAN2 to mRNA via its interaction with RNA and with PAB1. The chain is PAN2-PAN3 deadenylation complex subunit PAN3 from Kluyveromyces lactis (strain ATCC 8585 / CBS 2359 / DSM 70799 / NBRC 1267 / NRRL Y-1140 / WM37) (Yeast).